Reading from the N-terminus, the 385-residue chain is Probable thioesterase PNKD (385 aa).

Residues 31–42 (NKASQNRSRALQ) show a composition bias toward polar residues. The segment at 31–57 (NKASQNRSRALQSHSSPECKEEPEPLS) is disordered. Histidine 172, histidine 174, aspartate 176, histidine 177, histidine 229, aspartate 253, and histidine 291 together coordinate Zn(2+).

This sequence belongs to the metallo-beta-lactamase superfamily. Glyoxalase II family. The cofactor is Zn(2+). In terms of processing, undergoes cleavage at the N-terminus.

It localises to the cell membrane. The protein localises to the mitochondrion. The catalysed reaction is a thioester + H2O = a thiol + a carboxylate + H(+). Functionally, probable thioesterase that may play a role in cellular detoxification processes; it likely acts on a yet-unknown alpha-hydroxythioester substrate. In vitro, it is able to catalyze the hydrolysis of S-D-lactoyl-glutathione to form glutathione and D-lactic acid at very low rate, though this reaction is not physiologically relevant in vivo. This chain is Probable thioesterase PNKD (PNKD), found in Bos taurus (Bovine).